The chain runs to 375 residues: Non-structural protein NS5 (375 aa).

The sequence is that of Non-structural protein NS5 (NS-5) from Rottboellia (Sorghum).